Here is a 202-residue protein sequence, read N- to C-terminus: Superoxide dismutase [Mn], mitochondrial (202 aa).

The N-terminal 5 residues, 1-5, are a transit peptide targeting the mitochondrion; the sequence is HGRGM. Position 31 (H31) interacts with Mn(2+). Y39 is modified (3'-nitrotyrosine). Residue K49 is modified to N6-acetyllysine; alternate. N6-succinyllysine; alternate is present on K49. H79 contributes to the Mn(2+) binding site. K95 carries the N6-acetyllysine modification. N6-acetyllysine; alternate occurs at positions 103 and 111. K103 and K111 each carry N6-succinyllysine; alternate. Residues D164 and H168 each coordinate Mn(2+). Position 183 is an N6-acetyllysine (K183).

It belongs to the iron/manganese superoxide dismutase family. Homotetramer. Requires Mn(2+) as cofactor. In terms of processing, nitrated under oxidative stress. Nitration coupled with oxidation inhibits the catalytic activity. Acetylation at Lys-122 decreases enzymatic activity. Deacetylated by SIRT3 upon exposure to ionizing radiations or after long fasting. Post-translationally, polyubiquitinated; leading to proteasomal degradation. Deubiquitinated by USP36 which increases protein stability.

It localises to the mitochondrion matrix. The enzyme catalyses 2 superoxide + 2 H(+) = H2O2 + O2. Functionally, destroys superoxide anion radicals which are normally produced within the cells and which are toxic to biological systems. The sequence is that of Superoxide dismutase [Mn], mitochondrial (SOD2) from Oryctolagus cuniculus (Rabbit).